The chain runs to 184 residues: Large ribosomal subunit protein uL18 (184 aa).

This sequence belongs to the universal ribosomal protein uL18 family. As to quaternary structure, part of the 50S ribosomal subunit. Contacts the 5S and 23S rRNAs.

In terms of biological role, this is one of the proteins that bind and probably mediate the attachment of the 5S RNA into the large ribosomal subunit, where it forms part of the central protuberance. This Natronomonas pharaonis (strain ATCC 35678 / DSM 2160 / CIP 103997 / JCM 8858 / NBRC 14720 / NCIMB 2260 / Gabara) (Halobacterium pharaonis) protein is Large ribosomal subunit protein uL18.